We begin with the raw amino-acid sequence, 244 residues long: Ribonuclease 3 2 (244 aa).

The 126-residue stretch at 11–136 folds into the RNase III domain; the sequence is LKALLRRLGL…LLGALYLSVG (126 aa). E50 serves as a coordination point for Mg(2+). The active site involves D54. Mg(2+) is bound by residues D122 and E125. The active site involves E125. The DRBM domain maps to 164 to 234; sequence NYKEALQAWT…AQQAYQDFIA (71 aa).

It belongs to the ribonuclease III family. In terms of assembly, homodimer. The cofactor is Mg(2+).

It localises to the cytoplasm. It catalyses the reaction Endonucleolytic cleavage to 5'-phosphomonoester.. Its function is as follows. Digests double-stranded RNA. Involved in the processing of primary rRNA transcript to yield the immediate precursors to the large and small rRNAs (23S and 16S). Processes some mRNAs, and tRNAs when they are encoded in the rRNA operon. Processes pre-crRNA and tracrRNA of type II CRISPR loci if present in the organism. The protein is Ribonuclease 3 2 of Synechocystis sp. (strain ATCC 27184 / PCC 6803 / Kazusa).